A 238-amino-acid chain; its full sequence is 7-cyano-7-deazaguanine synthase (238 aa).

Phe14–Leu24 is a binding site for ATP. Cys195, Cys204, Cys207, and Cys210 together coordinate Zn(2+).

The protein belongs to the QueC family. Zn(2+) serves as cofactor.

It catalyses the reaction 7-carboxy-7-deazaguanine + NH4(+) + ATP = 7-cyano-7-deazaguanine + ADP + phosphate + H2O + H(+). Its pathway is purine metabolism; 7-cyano-7-deazaguanine biosynthesis. Catalyzes the ATP-dependent conversion of 7-carboxy-7-deazaguanine (CDG) to 7-cyano-7-deazaguanine (preQ(0)). This chain is 7-cyano-7-deazaguanine synthase, found in Baumannia cicadellinicola subsp. Homalodisca coagulata.